We begin with the raw amino-acid sequence, 338 residues long: Electron transfer flavoprotein subunit alpha (338 aa).

275–303 lines the FAD pocket; it reads IYIACAISGAIQPLAGMTGSDCIIAINKD.

It belongs to the ETF alpha-subunit/FixB family. In terms of assembly, heterodimer of an alpha and a beta subunit. FAD serves as cofactor.

In terms of biological role, the electron transfer flavoprotein serves as a specific electron acceptor for other dehydrogenases. It transfers the electrons to the main respiratory chain via ETF-ubiquinone oxidoreductase (ETF dehydrogenase). This is Electron transfer flavoprotein subunit alpha (etfA) from Megasphaera elsdenii.